The following is a 713-amino-acid chain: Polyribonucleotide nucleotidyltransferase (713 aa).

Residues D487 and D493 each coordinate Mg(2+). The KH domain maps to 554–613 (PRIEVMNIPVDKIREVIGSGGKVIREIVEKTGAKINIEDDGTVKIASASGKEIEAARKWI). Positions 623-691 (GQIYEGTVVK…ERGKVRLSMK (69 aa)) constitute an S1 motif domain.

It belongs to the polyribonucleotide nucleotidyltransferase family. It depends on Mg(2+) as a cofactor.

Its subcellular location is the cytoplasm. It carries out the reaction RNA(n+1) + phosphate = RNA(n) + a ribonucleoside 5'-diphosphate. Functionally, involved in mRNA degradation. Catalyzes the phosphorolysis of single-stranded polyribonucleotides processively in the 3'- to 5'-direction. The chain is Polyribonucleotide nucleotidyltransferase from Agrobacterium fabrum (strain C58 / ATCC 33970) (Agrobacterium tumefaciens (strain C58)).